The chain runs to 119 residues: MASTYRTTIRANTYQFRETTMIDPKKIEQIARQVHESMPKGIREFGEDIEKKIRQTLQSQLTRLDLVSREEFDVQTQVLLRTREKLALLEQRLSELEARDKPEEVKPAPAIPPVDPQQE.

A coiled-coil region spans residues 79-99; sequence LLRTREKLALLEQRLSELEAR. Over residues 96–106 the composition is skewed to basic and acidic residues; sequence LEARDKPEEVK. The disordered stretch occupies residues 96 to 119; that stretch reads LEARDKPEEVKPAPAIPPVDPQQE. The segment covering 109-119 has biased composition (pro residues); sequence PAIPPVDPQQE.

This sequence belongs to the UbiK family. Homotrimer.

The protein localises to the cytoplasm. It participates in cofactor biosynthesis; ubiquinone biosynthesis. In terms of biological role, required for efficient ubiquinone (coenzyme Q) biosynthesis under aerobic conditions. UbiK is probably an accessory factor of Ubi enzymes and facilitates ubiquinone biosynthesis by acting as an assembly factor, a targeting factor, or both. Dispensable for ubiquinone biosynthesis under anaerobiosis. Required for proliferation in macrophages and virulence in mice. Significantly contributes to colonization and invasion as well as host inflammation and innate immunity after infection. In vitro, has membrane fusogenic activity at acidic pH. This chain is Ubiquinone biosynthesis accessory factor UbiK, found in Salmonella typhimurium (strain LT2 / SGSC1412 / ATCC 700720).